The primary structure comprises 476 residues: Aspartyl/glutamyl-tRNA(Asn/Gln) amidotransferase subunit B (476 aa).

It belongs to the GatB/GatE family. GatB subfamily. Heterotrimer of A, B and C subunits.

The enzyme catalyses L-glutamyl-tRNA(Gln) + L-glutamine + ATP + H2O = L-glutaminyl-tRNA(Gln) + L-glutamate + ADP + phosphate + H(+). It carries out the reaction L-aspartyl-tRNA(Asn) + L-glutamine + ATP + H2O = L-asparaginyl-tRNA(Asn) + L-glutamate + ADP + phosphate + 2 H(+). Allows the formation of correctly charged Asn-tRNA(Asn) or Gln-tRNA(Gln) through the transamidation of misacylated Asp-tRNA(Asn) or Glu-tRNA(Gln) in organisms which lack either or both of asparaginyl-tRNA or glutaminyl-tRNA synthetases. The reaction takes place in the presence of glutamine and ATP through an activated phospho-Asp-tRNA(Asn) or phospho-Glu-tRNA(Gln). The protein is Aspartyl/glutamyl-tRNA(Asn/Gln) amidotransferase subunit B of Lactobacillus helveticus (strain DPC 4571).